Here is a 490-residue protein sequence, read N- to C-terminus: MNFGFLGTILTILLVVGFITNVVLAFVIIFLERDRRTASSTWAWLFVLFVLPVIGFILYLFLGRTVSKKKMEKNNGDELNAFEDLVQDQIDSFDKHNYGYINDQVIKHRDLIRMLLMKQDAFLTENNKIDLFTDGHKLYEKVLEDIYNAQDYIHLEYYTFELDGLGKRILDALETKLKEGLEVKLLYDDVGSKKVRLSKFKHFRALGGEVEAFFPSKVPLINFRMNNRNHRKIIIIDGQIGYVGGFNVGDDYLGLGKLGYWRDTHTRVQGEGIDALQLRFILDWNSQSHRPQFKFDQKYFPKKIGDKGNAAIQIASSGPAFDLHQIEYGYTKMIMSAKKSIYLQSPYFIPDQSYINALKMAANSGVEVNLMIPCKPDHPFVYWATFSNAADLLDSGVNIYTYQNGFIHSKILMIDDEISSIGSANMDFRSFELNFEVNAFIYDEDIAKQLRQAFEKDIEQSKLLTKEVYDKRPLSIKFKEGLAKLISPIL.

2 consecutive transmembrane segments (helical) span residues Ile-9–Ile-29 and Trp-42–Leu-62. PLD phosphodiesterase domains follow at residues Met-225–Tyr-252 and Gln-403–Ser-430. Catalysis depends on residues His-230, Lys-232, Asp-237, His-408, Lys-410, and Asp-415.

It belongs to the phospholipase D family. Cardiolipin synthase subfamily.

It is found in the cell membrane. The enzyme catalyses 2 a 1,2-diacyl-sn-glycero-3-phospho-(1'-sn-glycerol) = a cardiolipin + glycerol. Catalyzes the reversible phosphatidyl group transfer from one phosphatidylglycerol molecule to another to form cardiolipin (CL) (diphosphatidylglycerol) and glycerol. The polypeptide is Cardiolipin synthase 1 (cls1) (Staphylococcus epidermidis (strain ATCC 12228 / FDA PCI 1200)).